We begin with the raw amino-acid sequence, 835 residues long: Microcephalin (835 aa).

The BRCT 1 domain occupies 1–93 (MAAPILKDVV…AHIDESLFPA (93 aa)). Serine 279, serine 287, serine 296, and serine 333 each carry phosphoserine. Disordered stretches follow at residues 313-381 (PDQK…RRSI) and 419-443 (DNLK…AQLS). Threonine 335 bears the Phosphothreonine mark. Residues 343–361 (LLIHSRPRSSSVKRKRVSH) are compositionally biased toward basic residues. The segment covering 434–443 (QLPSSPAQLS) has biased composition (polar residues). Serine 548 carries the phosphoserine modification. Positions 555–584 (AVGLKSTQNKGTTSKISNSSEGEAQSEHEP) are disordered. Positions 559 to 577 (KSTQNKGTTSKISNSSEGE) are enriched in polar residues. 2 BRCT domains span residues 640 to 730 (SGRG…PFEL) and 751 to 833 (YRGT…NYLL).

As to quaternary structure, interacts with CDC27 and maybe other components of the APC/C complex. Interacts with histone variant H2AX under DNA damage conditions. Expressed in fetal brain, liver and kidney.

Its subcellular location is the cytoplasm. It is found in the cytoskeleton. The protein resides in the microtubule organizing center. The protein localises to the centrosome. Its function is as follows. Implicated in chromosome condensation and DNA damage induced cellular responses. May play a role in neurogenesis and regulation of the size of the cerebral cortex. This Homo sapiens (Human) protein is Microcephalin.